A 1644-amino-acid polypeptide reads, in one-letter code: Kinesin-like protein unc-104 (1644 aa).

A Kinesin motor domain is found at 3-351; sequence SVKVAVRVRP…LRYADRAKQI (349 aa). Residue 97–104 participates in ATP binding; it reads GQTGAGKS. Residues 358-436 adopt a coiled-coil conformation; the sequence is NEDANAKLIR…IAELNETWEE (79 aa). Residues 499–565 enclose the FHA domain; the sequence is TRLGTSEANV…LQTGSRVILG (67 aa). Residues 574-591 show a composition bias toward basic and acidic residues; that stretch reads HPEQAREKREKPKDKDVG. A disordered region spans residues 574 to 598; sequence HPEQAREKREKPKDKDVGENPGGNA. Residues 631-672 are a coiled coil; the sequence is EQFKREKLAADQEFEEQRKTYEARIDALQKQVEEQSMTMSMY. Disordered regions lie at residues 953-985 and 1419-1440; these read EQED…LQPG and HMVI…TLPE. Residues 969 to 984 show a composition bias toward basic and acidic residues; sequence ELHESNEHEPGEHLQP. The segment covering 1428–1437 has biased composition (polar residues); that stretch reads TPVKDQQTPT. In terms of domain architecture, PH spans 1542-1640; that stretch reads VVARKGYLNV…WLYAINPLLA (99 aa).

It belongs to the TRAFAC class myosin-kinesin ATPase superfamily. Kinesin family. Unc-104 subfamily. In terms of assembly, monomer.

The protein localises to the cytoplasm. Its subcellular location is the cytoskeleton. In terms of biological role, required for presynaptic maturation, has a role in axonal transport of dense-core vesicles carrying synaptic vesicle precursors, components required for the morphological transformation of axonal growth cones to mature boutons. The polypeptide is Kinesin-like protein unc-104 (Aedes aegypti (Yellowfever mosquito)).